Consider the following 504-residue polypeptide: MAPSAGEDKHSSAKRVAVIGAGVSGLAAAYKLKIHGLNVTVFEAEGKAGGKLRSVSQDGLIWDEGANTMTESEGDVTFLIDSLGLREKQQFPLSQNKRYIARNGTPVLLPSNPIDLIKSNFLSTGSKLQMLLEPILWKNKKLSQVSDSHESVSGFFQRHFGKEVVDYLIDPFVAGTCGGDPDSLSMHHSFPELWNLEKRFGSVILGAIRSKLSPKNEKKQGPPKTSANKKRQRGSFSFLGGMQTLTDAICKDLREDELRLNSRVLELSCSCTEDSAIDSWSIISASPHKRQSEEESFDAVIMTAPLCDVKSMKIAKRGNPFLLNFIPEVDYVPLSVVITTFKRENVKYPLEGFGVLVPSKEQQHGLKTLGTLFSSMMFPDRAPNNVYLYTTFVGGSRNRELAKASRTELKEIVTSDLKQLLGAEGEPTYVNHLYWSKAFPLYGHNYDSVLDAIDKMEKNLPGLFYAGNHRGGLSVGKALSSGCNAADLVISYLESVSTDSKRHC.

FAD contacts are provided by residues 20-25, 43-44, Lys-51, and 65-68; these read GAGVSG, EA, and GANT. A disordered region spans residues 213–232; sequence SPKNEKKQGPPKTSANKKRQ. Residues Val-264 and 473–475 each bind FAD; that span reads LSV.

This sequence belongs to the protoporphyrinogen/coproporphyrinogen oxidase family. Protoporphyrinogen oxidase subfamily. FAD serves as cofactor.

Its subcellular location is the mitochondrion. It carries out the reaction protoporphyrinogen IX + 3 O2 = protoporphyrin IX + 3 H2O2. Its pathway is porphyrin-containing compound metabolism; protoporphyrin-IX biosynthesis; protoporphyrin-IX from protoporphyrinogen-IX: step 1/1. Its activity is regulated as follows. Inhibited by the herbicide acifluorfen. Its function is as follows. Catalyzes the 6-electron oxidation of protoporphyrinogen-IX to form protoporphyrin-IX. Functionally, provides precursor for the mitochondrial and plastidic heme synthesis and the predominant chlorophyll synthesis in plastids. The polypeptide is Protoporphyrinogen oxidase, mitochondrial (PPXII) (Nicotiana tabacum (Common tobacco)).